Reading from the N-terminus, the 466-residue chain is Uronate isomerase (466 aa).

This sequence belongs to the metallo-dependent hydrolases superfamily. Uronate isomerase family.

It catalyses the reaction D-glucuronate = D-fructuronate. The catalysed reaction is aldehydo-D-galacturonate = keto-D-tagaturonate. It functions in the pathway carbohydrate metabolism; pentose and glucuronate interconversion. The protein is Uronate isomerase of Streptococcus agalactiae serotype III (strain NEM316).